Reading from the N-terminus, the 84-residue chain is Envelope glycoprotein N (84 aa).

The first 26 residues, 1–26 (MSCKKSARQSLYVSLCLFYILVFAAA), serve as a signal peptide directing secretion. Over 27-47 (TEVDFYSPECHSHTYEIVLNS) the chain is Virion surface. Residues 48–68 (FSSIWLLINLFLLLCSFAIFL) form a helical membrane-spanning segment. Residues 69 to 84 (KYWCYKTFASETVKGY) lie on the Intravirion side of the membrane.

This sequence belongs to the herpesviridae glycoprotein N family. Interacts (via N-terminus) with gM (via N-terminus). The gM-gN heterodimer forms the gCII complex.

The protein localises to the virion membrane. The protein resides in the host membrane. It localises to the host Golgi apparatus. Its subcellular location is the host trans-Golgi network. In terms of biological role, envelope glycoprotein necessary for proper maturation of gM and modulation of its membrane fusion activity. Also plays a critical role in virion morphogenesis. The chain is Envelope glycoprotein N from Homo sapiens (Human).